The chain runs to 292 residues: Small ribosomal subunit protein uS9m (292 aa).

The disordered stretch occupies residues 273-292 (VERKKPGKRKARKMPTWVKR).

The protein belongs to the universal ribosomal protein uS9 family.

It localises to the mitochondrion. The sequence is that of Small ribosomal subunit protein uS9m (MRPS9) from Kluyveromyces marxianus (Yeast).